The following is a 758-amino-acid chain: MSEVLPADSGVDTLAVFMASSGTTDVTNRNSPATPPNTLNLRSSHNELLNAEIKHTETKNSTPPKCRKKYALTNIQAAMGLSDPAAQPLLGNGSANIKLVKNGENQLRKAAEQGQQDPNKNLSPTAVINITSEKLEGKEPHPQDSSSCEILPSQPRRTKSFLNYYADLETSARELEQNRGNHHGTAEEKSQPVQGQASTIIGNGDLLLQKPNRPQSSPEDGQVATVSSSPETKKDHPKTGAKTDCALHRIQNLAPSDEESSWTTLSQDSASPSSPDETDIWSDHSFQTDPDLPPGWKRVSDIAGTYYWHIPTGTTQWERPVSIPADLQGSRKGSLSSVTPSPTPENEKQPWSDFAVLNGGKINSDIWKDLHAATVNPDPSLKEFEGATLRYASLKLRNAPHPDDDDSCSINSDPEAKCFAVRSLGWVEMAEEDLAPGKSSVAVNNCIRQLSYCKNDIRDTVGIWGEGKDMYLILENDMLSLVDPMDRSVLHSQPIVSIRVWGVGRDNGRDFAYVARDKDTRILKCHVFRCDTPAKAIATSLHEICSKIMAERKNAKALACSSLQERANVNLDVPLQVDFPTPKTELVQKFHVQYLGMLPVDKPVGMDILNSAIENLMTSSNKEDWLSVNMNVADATVTVISEKNEEEVLVECRVRFLSFMGVGKDVHTFAFIMDTGNQRFECHVFWCEPNAGNVSEAVQAACMLRYQKCLVARPPSQKVRPPPPPADSVTRRVTTNVKRGVLSLIDTLKQKRPVTEMP.

At serine 123 the chain carries Phosphoserine. The tract at residues lysine 134–glutamine 154 is disordered. Serine 160 bears the Phosphoserine mark. The span at glutamate 176–serine 190 shows a compositional bias: basic and acidic residues. 3 disordered regions span residues glutamate 176–glycine 195, leucine 206–glycine 295, and aspartate 326–tryptophan 351. 2 stretches are compositionally biased toward polar residues: residues asparagine 212–proline 230 and serine 261–proline 275. The WW domain maps to proline 290–serine 322. The span at arginine 331 to proline 340 shows a compositional bias: polar residues. Serine 334, serine 409, and serine 412 each carry phosphoserine. PID domains follow at residues aspartate 413–aspartate 578 and threonine 584–asparagine 736.

In terms of assembly, interacts (via C-terminus) with APP (via C-terminus). Interacts with APLP2 (via cytoplasmic domain). As to expression, widely expressed.

The protein localises to the endoplasmic reticulum. Its subcellular location is the golgi apparatus. The protein resides in the early endosome. Its function is as follows. Plays a role in the maintenance of lens transparency, and may also play a role in muscle cell strength. Involved in hippocampal neurite branching and neuromuscular junction formation, as a result plays a role in spatial memory functioning. Activates transcription of APP. This Homo sapiens (Human) protein is Amyloid beta precursor protein binding family B member 2.